The chain runs to 840 residues: Protein argonaute-2 (840 aa).

Residues proline 210–alanine 329 enclose the PAZ domain. Serine 368 is subject to Phosphoserine. Residues leucine 498–valine 799 form the Piwi domain. A divalent metal cation contacts are provided by aspartate 578 and aspartate 650. Proline 681 is modified (4-hydroxyproline). Residue histidine 788 participates in a divalent metal cation binding. Phosphoserine is present on residues serine 805, serine 809, serine 812, and serine 815.

Belongs to the argonaute family. Ago subfamily. As to quaternary structure, interacts with DICER1 through its Piwi domain and with TARBP2 during assembly of the RNA-induced silencing complex (RISC). Together, DICER1, AGO2 and TARBP2 constitute the trimeric RISC loading complex (RLC), or micro-RNA (miRNA) loading complex (miRLC). Within the RLC/miRLC, DICER1 and TARBP2 are required to process precursor miRNAs (pre-miRNAs) to mature miRNAs and then load them onto AGO2. AGO2 bound to the mature miRNA constitutes the minimal RISC and may subsequently dissociate from DICER1 and TARBP2. Note however that the term RISC has also been used to describe the trimeric RLC/miRLC. The formation of RISC complexes containing siRNAs rather than miRNAs appears to occur independently of DICER1. Interacts with AGO1. Also interacts with DDB1, DDX5, DDX6, DDX20, DHX30, DHX36, DDX47, DHX9, ELAVL, FXR1, GEMIN4, HNRNPF, IGF2BP1, ILF3, IMP8, MATR3, PABPC1, PRMT5, P4HA1, P4HB, RBM4, SART3, TNRC6A, TNRC6B, UPF1 and YBX1. Interacts with the P-body components DCP1A and XRN1. Associates with polysomes and messenger ribonucleoproteins (mNRPs). Interacts with RBM4; the interaction is modulated under stress-induced conditions, occurs under both cell proliferation and differentiation conditions and in an RNA- and phosphorylation-independent manner. Interacts with LIMD1, WTIP and AJUBA. Interacts with TRIM71; the interaction increases in presence of RNA. Interacts with APOBEC3G in an RNA-dependent manner. Interacts with APOBEC3A, APOBEC3C, APOBEC3F and APOBEC3H. Interacts with DICER1, TARBP2, EIF6, MOV10 and RPL7A (60S ribosome subunit); they form a large RNA-induced silencing complex (RISC). Interacts with FMR1. Interacts with ZFP36. Interacts with RC3H1; the interaction is RNA independent. Found in a complex composed of AGO2, CHD7 and ARB2A. Interacts with SND1 and SYT11. Interacts with CLNK. Interacts with GARRE1. In terms of processing, hydroxylated. 4-hydroxylation appears to enhance protein stability but is not required for miRNA-binding or endonuclease activity. Ubiquitinated on surface-exposed lysines by a SCF-like E3 ubiquitin-protein ligase complex containing ZSWIM8 during target-directed microRNA degradation (TDMD), a process that mediates degradation of microRNAs (miRNAs). Ubiquitination by the SCF-like E3 ubiquitin-protein ligase complex containing ZSWIM8 leads to its subsequent degradation, thereby exposing miRNAs for degradation. ZSWIM8 recognizes and binds AGO2 when it is engaged with a TDMD target. Post-translationally, phosphorylation at Ser-368 by AKT3; leads to up-regulate translational repression of microRNA target and down-regulate endonucleolytic cleavage. In terms of processing, a phosphorylation cycle of C-terminal serine cluster (Ser-805-Ser-815) regulates the release of target mRNAs. Target-binding leads to phosphorylation of these residues by CSNK1A1, which reduces the affinity of AGO2 for mRNA and enables target release. The ANKRD52-PPP6C phosphatase complex dephosphorylates the residues, which primes AGO2 for binding a new target.

It localises to the cytoplasm. The protein resides in the P-body. The protein localises to the nucleus. The enzyme catalyses Endonucleolytic cleavage to 5'-phosphomonoester.. Functionally, required for RNA-mediated gene silencing (RNAi) by the RNA-induced silencing complex (RISC). The 'minimal RISC' appears to include AGO2 bound to a short guide RNA such as a microRNA (miRNA) or short interfering RNA (siRNA). These guide RNAs direct RISC to complementary mRNAs that are targets for RISC-mediated gene silencing. The precise mechanism of gene silencing depends on the degree of complementarity between the miRNA or siRNA and its target. Binding of RISC to a perfectly complementary mRNA generally results in silencing due to endonucleolytic cleavage of the mRNA specifically by AGO2. Binding of RISC to a partially complementary mRNA results in silencing through inhibition of translation, and this is independent of endonuclease activity. May inhibit translation initiation by binding to the 7-methylguanosine cap, thereby preventing the recruitment of the translation initiation factor eIF4-E. May also inhibit translation initiation via interaction with EIF6, which itself binds to the 60S ribosomal subunit and prevents its association with the 40S ribosomal subunit. The inhibition of translational initiation leads to the accumulation of the affected mRNA in cytoplasmic processing bodies (P-bodies), where mRNA degradation may subsequently occur. In some cases RISC-mediated translational repression is also observed for miRNAs that perfectly match the 3' untranslated region (3'-UTR). Can also up-regulate the translation of specific mRNAs under certain growth conditions. Binds to the AU element of the 3'-UTR of the TNF (TNF-alpha) mRNA and up-regulates translation under conditions of serum starvation. Also required for transcriptional gene silencing (TGS), in which short RNAs known as antigene RNAs or agRNAs direct the transcriptional repression of complementary promoter regions. This Oryctolagus cuniculus (Rabbit) protein is Protein argonaute-2 (AGO2).